Consider the following 372-residue polypeptide: 4-hydroxy-3-methylbut-2-en-1-yl diphosphate synthase (flavodoxin) (372 aa).

Cys270, Cys273, Cys305, and Glu312 together coordinate [4Fe-4S] cluster.

The protein belongs to the IspG family. [4Fe-4S] cluster serves as cofactor.

The enzyme catalyses (2E)-4-hydroxy-3-methylbut-2-enyl diphosphate + oxidized [flavodoxin] + H2O + 2 H(+) = 2-C-methyl-D-erythritol 2,4-cyclic diphosphate + reduced [flavodoxin]. The protein operates within isoprenoid biosynthesis; isopentenyl diphosphate biosynthesis via DXP pathway; isopentenyl diphosphate from 1-deoxy-D-xylulose 5-phosphate: step 5/6. Its function is as follows. Converts 2C-methyl-D-erythritol 2,4-cyclodiphosphate (ME-2,4cPP) into 1-hydroxy-2-methyl-2-(E)-butenyl 4-diphosphate. This is 4-hydroxy-3-methylbut-2-en-1-yl diphosphate synthase (flavodoxin) from Citrobacter koseri (strain ATCC BAA-895 / CDC 4225-83 / SGSC4696).